Here is a 129-residue protein sequence, read N- to C-terminus: Ribosome-binding factor A (129 aa).

Belongs to the RbfA family. As to quaternary structure, monomer. Binds 30S ribosomal subunits, but not 50S ribosomal subunits or 70S ribosomes.

It is found in the cytoplasm. Its function is as follows. One of several proteins that assist in the late maturation steps of the functional core of the 30S ribosomal subunit. Associates with free 30S ribosomal subunits (but not with 30S subunits that are part of 70S ribosomes or polysomes). Required for efficient processing of 16S rRNA. May interact with the 5'-terminal helix region of 16S rRNA. The sequence is that of Ribosome-binding factor A from Azotobacter vinelandii (strain DJ / ATCC BAA-1303).